Here is a 181-residue protein sequence, read N- to C-terminus: Transcription antitermination protein NusB (181 aa).

Residues 1–36 (MTEDNNKAAGAKPRPARQVRTGLTSTGARKASAKSN) form a disordered region.

This sequence belongs to the NusB family.

Its function is as follows. Involved in transcription antitermination. Required for transcription of ribosomal RNA (rRNA) genes. Binds specifically to the boxA antiterminator sequence of the ribosomal RNA (rrn) operons. The sequence is that of Transcription antitermination protein NusB from Variovorax paradoxus (strain S110).